The chain runs to 442 residues: Trigger factor (442 aa).

Residues 163-248 form the PPIase FKBP-type domain; that stretch reads YDRVTINYCI…IIKIEKKQEL (86 aa).

The protein belongs to the FKBP-type PPIase family. Tig subfamily.

Its subcellular location is the cytoplasm. The catalysed reaction is [protein]-peptidylproline (omega=180) = [protein]-peptidylproline (omega=0). Its function is as follows. Involved in protein export. Acts as a chaperone by maintaining the newly synthesized protein in an open conformation. Functions as a peptidyl-prolyl cis-trans isomerase. This is Trigger factor from Buchnera aphidicola subsp. Acyrthosiphon pisum (strain Tuc7).